The chain runs to 623 residues: ATP-dependent zinc metalloprotease FtsH (623 aa).

The Cytoplasmic portion of the chain corresponds to M1–R7. A helical transmembrane segment spans residues P8–Q28. Residues Q29 to P117 lie on the Periplasmic side of the membrane. The chain crosses the membrane as a helical span at residues L118–V138. Over G139 to P623 the chain is Cytoplasmic. G214–T221 contributes to the ATP binding site. Zn(2+) is bound at residue H435. The active site involves E436. Zn(2+)-binding residues include H439 and D511.

This sequence in the central section; belongs to the AAA ATPase family. It in the C-terminal section; belongs to the peptidase M41 family. In terms of assembly, homohexamer. Zn(2+) serves as cofactor.

It is found in the cell inner membrane. Its function is as follows. Acts as a processive, ATP-dependent zinc metallopeptidase for both cytoplasmic and membrane proteins. Plays a role in the quality control of integral membrane proteins. In Pelobacter propionicus (strain DSM 2379 / NBRC 103807 / OttBd1), this protein is ATP-dependent zinc metalloprotease FtsH.